Here is a 362-residue protein sequence, read N- to C-terminus: Alpha-2-HS-glycoprotein (362 aa).

Positions 1 to 15 (LILFFCLAQLWGCRA) are cleaved as a signal peptide. Residues 24–130 (YREPACDDVE…QFSVLFAKCD (107 aa)) form the Cystatin fetuin-A-type 1 domain. Cystine bridges form between C29–C353, C86–C97, C111–C129, C143–C146, C205–C216, and C227–C244. N96 carries N-linked (GlcNAc...) asparagine glycosylation. Residues S131, S132, and S135 each carry the phosphoserine modification. One can recognise a Cystatin fetuin-A-type 2 domain in the interval 141-252 (KVCPNCPLLA…TCTVFQTQPV (112 aa)). N-linked (GlcNAc...) asparagine glycans are attached at residues N153 and N173. S314, S318, S321, and S323 each carry phosphoserine. O-linked (GalNAc...) threonine glycosylation is present at T332.

Belongs to the fetuin family. Phosphorylated by FAM20C in the extracellular medium. As to expression, expressed by the liver and secreted in plasma.

Its subcellular location is the secreted. The protein is Alpha-2-HS-glycoprotein (AHSG) of Sus scrofa (Pig).